The sequence spans 219 residues: Pyridoxal 5'-phosphate synthase subunit PDX2 (219 aa).

Gly-52 to Ser-54 contacts L-glutamine. The active-site Nucleophile is the Cys-87. L-glutamine is bound by residues Arg-121 and Ile-153–Arg-154. Active-site charge relay system residues include His-196 and Glu-198.

This sequence belongs to the glutaminase PdxT/SNO family. As to quaternary structure, in the presence of Pdx1, forms a dodecamer of heterodimers. Only shows activity in the heterodimer.

The protein resides in the cytoplasm. It catalyses the reaction aldehydo-D-ribose 5-phosphate + D-glyceraldehyde 3-phosphate + L-glutamine = pyridoxal 5'-phosphate + L-glutamate + phosphate + 3 H2O + H(+). It carries out the reaction L-glutamine + H2O = L-glutamate + NH4(+). Its pathway is cofactor biosynthesis; pyridoxal 5'-phosphate biosynthesis. Functionally, catalyzes the hydrolysis of glutamine to glutamate and ammonia as part of the biosynthesis of pyridoxal 5'-phosphate. The resulting ammonia molecule is channeled to the active site of Pdx1. The chain is Pyridoxal 5'-phosphate synthase subunit PDX2 from Plasmodium falciparum (isolate 3D7).